We begin with the raw amino-acid sequence, 446 residues long: uncharacterized protein (446 aa).

Disordered regions lie at residues 63–95 (KNKP…SDLR) and 155–232 (AESS…HPVK). Polar residues predominate over residues 156 to 169 (ESSVPTPKLTNESN). Composition is skewed to basic and acidic residues over residues 182–199 (DQHE…DHSA) and 213–227 (ITKE…EARK).

This is an uncharacterized protein from Mus musculus (Mouse).